The primary structure comprises 297 residues: Protein MIZU-KUSSEI 1 (297 aa).

In terms of tissue distribution, expressed in root meristematic region, cortical cells, lateral root cap cells, columella cells of the root cap, mature region of the roots and leaf hydathodes.

Its subcellular location is the endoplasmic reticulum membrane. Its function is as follows. Plays a role in lateral root development by maintaining auxin levels. This function requires GNOM (GN/MIZ2) activity. Negatively regulates cytokinin sensitivity on root development. Positively regulates hydrotropism in roots. This is Protein MIZU-KUSSEI 1 (MIZ1) from Arabidopsis thaliana (Mouse-ear cress).